Here is a 71-residue protein sequence, read N- to C-terminus: Brevinin-1SN1 (71 aa).

The N-terminal stretch at 1–22 (MFTMKKPLLLLFFLGTINLSLC) is a signal peptide. Residues 23–45 (EEERNADEEEKRDGDDEMDAEVE) constitute a propeptide, removed in mature form. C65 and C71 are joined by a disulfide.

This sequence belongs to the frog skin active peptide (FSAP) family. Brevinin subfamily. In terms of tissue distribution, expressed by the skin glands.

The protein localises to the secreted. Functionally, antimicrobial peptide. Active against some Gram-negative and a variety of Gram-positive bacterial strains. Active against fungus C.glabrata 090902 but not against C.albicans ATCC 10231. Shows hemolytic activity against human erythrocytes. In Sylvirana spinulosa (Fine-spined frog), this protein is Brevinin-1SN1.